We begin with the raw amino-acid sequence, 400 residues long: S-adenosylmethionine synthase (400 aa).

ATP is bound at residue H15. D17 serves as a coordination point for Mg(2+). E43 is a K(+) binding site. E56 and Q99 together coordinate L-methionine. A flexible loop region spans residues 99 to 109 (QSLEIGAGVDT). Residues 174 to 176 (DGK), D254, 260 to 261 (RK), A277, and K281 contribute to the ATP site. D254 serves as a coordination point for L-methionine. K285 serves as a coordination point for L-methionine.

Belongs to the AdoMet synthase family. Homotetramer; dimer of dimers. Requires Mg(2+) as cofactor. K(+) serves as cofactor.

It localises to the cytoplasm. It carries out the reaction L-methionine + ATP + H2O = S-adenosyl-L-methionine + phosphate + diphosphate. Its pathway is amino-acid biosynthesis; S-adenosyl-L-methionine biosynthesis; S-adenosyl-L-methionine from L-methionine: step 1/1. Its function is as follows. Catalyzes the formation of S-adenosylmethionine (AdoMet) from methionine and ATP. The overall synthetic reaction is composed of two sequential steps, AdoMet formation and the subsequent tripolyphosphate hydrolysis which occurs prior to release of AdoMet from the enzyme. In Corynebacterium kroppenstedtii (strain DSM 44385 / JCM 11950 / CIP 105744 / CCUG 35717), this protein is S-adenosylmethionine synthase.